The following is a 633-amino-acid chain: 1-deoxy-D-xylulose-5-phosphate synthase (633 aa).

Residues His-74 and 115-117 (GHA) contribute to the thiamine diphosphate site. Asp-146 serves as a coordination point for Mg(2+). Thiamine diphosphate is bound by residues 147–148 (GA), Asn-175, Tyr-286, and Glu-363. Asn-175 is a Mg(2+) binding site.

It belongs to the transketolase family. DXPS subfamily. Homodimer. Mg(2+) serves as cofactor. Requires thiamine diphosphate as cofactor.

The catalysed reaction is D-glyceraldehyde 3-phosphate + pyruvate + H(+) = 1-deoxy-D-xylulose 5-phosphate + CO2. It participates in metabolic intermediate biosynthesis; 1-deoxy-D-xylulose 5-phosphate biosynthesis; 1-deoxy-D-xylulose 5-phosphate from D-glyceraldehyde 3-phosphate and pyruvate: step 1/1. Functionally, catalyzes the acyloin condensation reaction between C atoms 2 and 3 of pyruvate and glyceraldehyde 3-phosphate to yield 1-deoxy-D-xylulose-5-phosphate (DXP). This Dehalococcoides mccartyi (strain ATCC BAA-2100 / JCM 16839 / KCTC 5957 / BAV1) protein is 1-deoxy-D-xylulose-5-phosphate synthase.